The following is a 314-amino-acid chain: DNA-directed RNA polymerase subunit alpha (314 aa).

The segment at 1–227 (MTYFQIECVE…SLFYPLTNLN (227 aa)) is alpha N-terminal domain (alpha-NTD). The segment at 239–314 (EEEINQVLIE…LPKEKNIQNT (76 aa)) is alpha C-terminal domain (alpha-CTD).

This sequence belongs to the RNA polymerase alpha chain family. In plastids the minimal PEP RNA polymerase catalytic core is composed of four subunits: alpha, beta, beta', and beta''. When a (nuclear-encoded) sigma factor is associated with the core the holoenzyme is formed, which can initiate transcription.

Its subcellular location is the plastid. It localises to the chloroplast. It carries out the reaction RNA(n) + a ribonucleoside 5'-triphosphate = RNA(n+1) + diphosphate. DNA-dependent RNA polymerase catalyzes the transcription of DNA into RNA using the four ribonucleoside triphosphates as substrates. In Gracilaria tenuistipitata var. liui (Red alga), this protein is DNA-directed RNA polymerase subunit alpha.